The chain runs to 430 residues: Transcobalamin-2 (430 aa).

The N-terminal stretch at 1–18 (MELLKALLLLSGVFGALA) is a signal peptide. 3 disulfide bridges follow: C21-C270, C116-C312, and C165-C208. Cob(II)alamin-binding positions include 152–156 (TNYYQ), H193, 193–197 (HVSVD), N245, S248, Q294, and 398–400 (WQL).

Belongs to the eukaryotic cobalamin transport proteins family. In terms of assembly, interacts with CD320 (via LDL-receptor class A domains).

The protein resides in the secreted. Primary vitamin B12-binding and transport protein. Delivers cobalamin to cells. This is Transcobalamin-2 (Tcn2) from Mus musculus (Mouse).